The sequence spans 299 residues: uncharacterized protein (299 aa).

Active-site charge relay system residues include Thr-47 and Tyr-109. Catalysis depends on Tyr-138, which acts as the Proton donor. Residue Lys-168 is the Schiff-base intermediate with substrate of the active site.

It belongs to the DapA family. Homotetramer.

It is found in the cytoplasm. This is an uncharacterized protein from Chloroflexus aurantiacus (strain ATCC 29366 / DSM 635 / J-10-fl).